Consider the following 326-residue polypeptide: Thioredoxin reductase (326 aa).

40–47 (TGNNKGGQ) contributes to the FAD binding site. Cysteines 141 and 144 form a disulfide. FAD is bound at residue 291–300 (DVIDHVYKQA).

This sequence belongs to the class-II pyridine nucleotide-disulfide oxidoreductase family. Homodimer. It depends on FAD as a cofactor.

The protein resides in the cytoplasm. It carries out the reaction [thioredoxin]-dithiol + NADP(+) = [thioredoxin]-disulfide + NADPH + H(+). This chain is Thioredoxin reductase (trxB), found in Buchnera aphidicola subsp. Baizongia pistaciae (strain Bp).